A 326-amino-acid chain; its full sequence is Beta-ketoacyl-[acyl-carrier-protein] synthase III (326 aa).

Active-site residues include cysteine 115 and histidine 253. An ACP-binding region spans residues 254-258; sequence QANKR. The active site involves asparagine 283.

The protein belongs to the thiolase-like superfamily. FabH family. Homodimer.

The protein localises to the cytoplasm. It carries out the reaction malonyl-[ACP] + acetyl-CoA + H(+) = 3-oxobutanoyl-[ACP] + CO2 + CoA. The protein operates within lipid metabolism; fatty acid biosynthesis. Functionally, catalyzes the condensation reaction of fatty acid synthesis by the addition to an acyl acceptor of two carbons from malonyl-ACP. Catalyzes the first condensation reaction which initiates fatty acid synthesis and may therefore play a role in governing the total rate of fatty acid production. Possesses both acetoacetyl-ACP synthase and acetyl transacylase activities. Its substrate specificity determines the biosynthesis of branched-chain and/or straight-chain of fatty acids. The polypeptide is Beta-ketoacyl-[acyl-carrier-protein] synthase III (Bradyrhizobium diazoefficiens (strain JCM 10833 / BCRC 13528 / IAM 13628 / NBRC 14792 / USDA 110)).